We begin with the raw amino-acid sequence, 279 residues long: Beta-porphyranase E (279 aa).

Residues 1 to 18 (MGNTMLLTLLLVVVAAYG) form the signal peptide. Positions 19-277 (QTPPPPEGFR…WVRSYTLLPV (259 aa)) constitute a GH16 domain. Tryptophan 56, arginine 60, glutamate 141, glutamate 146, and glutamate 243 together coordinate substrate. Glutamate 141 acts as the Nucleophile in catalysis. The active-site Proton donor is glutamate 146.

This sequence belongs to the glycosyl hydrolase 16 family.

It localises to the periplasm. The enzyme catalyses Hydrolysis of beta-D-galactopyranose-(1-&gt;4)-alpha-L-galactopyranose-6-sulfate linkages in porphyran.. In terms of biological role, cleaves the sulfated polysaccharide porphyran at the (1-&gt;4) linkages between beta-D-galactopyranose and alpha-L-galactopyranose-6-sulfate, forming mostly the disaccharide alpha-L-galactopyranose-6-sulfate-(1-&gt;3)-beta-D-galactose. This Zobellia galactanivorans (strain DSM 12802 / CCUG 47099 / CIP 106680 / NCIMB 13871 / Dsij) protein is Beta-porphyranase E (porE).